The chain runs to 140 residues: ATP synthase epsilon chain (140 aa).

Belongs to the ATPase epsilon chain family. In terms of assembly, F-type ATPases have 2 components, CF(1) - the catalytic core - and CF(0) - the membrane proton channel. CF(1) has five subunits: alpha(3), beta(3), gamma(1), delta(1), epsilon(1). CF(0) has three main subunits: a, b and c.

The protein localises to the cell inner membrane. In terms of biological role, produces ATP from ADP in the presence of a proton gradient across the membrane. This is ATP synthase epsilon chain from Neisseria meningitidis serogroup B (strain ATCC BAA-335 / MC58).